The chain runs to 1479 residues: ESX secretion system protein EccC (1479 aa).

The Cytoplasmic portion of the chain corresponds to 1 to 235; the sequence is MSQLWVLYET…SQEGDGDPRG (235 aa). A helical transmembrane segment spans residues 236–256; it reads LWLMVLPPVMMLLVIGAVALI. Residues 257-259 are Extracellular-facing; it reads QPR. Residues 260–280 form a helical membrane-spanning segment; it reads GVFIMISIAMFATTIVTSTAQ. Over 281–1479 the chain is Cytoplasmic; sequence YMREKKARQM…DQKIQIPKVE (1199 aa). The stretch at 291 to 321 forms a coiled coil; that stretch reads RKEKRRRIYTNYLEQKREELQALSEKQRNVL. 2 FtsK domains span residues 652–848 and 984–1168; these read NDVV…NDSK and QSDY…SEKF. An ATP-binding site is contributed by 672 to 679; that stretch reads GTTGSGKS. Residue glutamate 785 is part of the active site. ATP is bound by residues 1004-1009, asparagine 1036, aspartate 1105, isoleucine 1197, aspartate 1206, 1287-1291, and isoleucine 1475; these read GYGKST and RKGKT. The FtsK 3 domain occupies 1267-1444; it reads VRPVAINMRT…ILVTKKSEQS (178 aa).

In terms of assembly, whole protein oligomerizes in native gels. Part of the ESX / type VII secretion system (T7SS), which is composed of cytosolic and membrane components. The ESX membrane complex is composed of EccB, EccC and EccD.

It is found in the cell membrane. EsxB binding to the third FtsK domain causes multimerization; a subsequent unknown step relieves the allosteric inhibition of linker 2 on FtsK domain 1, activating the ATPase activity. Part of the ESX specialized secretion system, which exports proteins from the cell including EsxA (ESAT-6) and EsxB (CFP-10). Might be the translocase subunit. Probably only the first FtsK domain can hydrolyze ATP. The protein is ESX secretion system protein EccC of Geobacillus thermodenitrificans (strain NG80-2).